A 583-amino-acid chain; its full sequence is Phosphoglucomutase, cytoplasmic (583 aa).

Positions 1-20 (MANFKVSRVETTPFEGQKPG) are disordered. 2 residues coordinate alpha-D-glucose 1,6-bisphosphate: Arg25 and Ser124. Ser124 acts as the Phosphoserine intermediate in catalysis. The Mg(2+) site is built by Ser124, Asp300, Asp302, and Asp304. Position 124 is a phosphoserine (Ser124). Residues Asp304, Arg305, Thr368, Glu387, Ser389, and Lys400 each contribute to the alpha-D-glucose 1,6-bisphosphate site.

The protein belongs to the phosphohexose mutase family. As to quaternary structure, monomer. The cofactor is Mg(2+).

Its subcellular location is the cytoplasm. It catalyses the reaction alpha-D-glucose 1-phosphate = alpha-D-glucose 6-phosphate. The enzyme catalyses O-phospho-L-seryl-[protein] + alpha-D-glucose 1-phosphate = alpha-D-glucose 1,6-bisphosphate + L-seryl-[protein]. It carries out the reaction alpha-D-glucose 1,6-bisphosphate + L-seryl-[protein] = O-phospho-L-seryl-[protein] + alpha-D-glucose 6-phosphate. Catalyzes the reversible isomerization of alpha-D-glucose 1-phosphate to alpha-D-glucose 6-phosphate. The mechanism proceeds via the intermediate compound alpha-D-glucose 1,6-bisphosphate. This enzyme participates in both the breakdown and synthesis of glucose. The chain is Phosphoglucomutase, cytoplasmic (PGM1) from Solanum tuberosum (Potato).